A 215-amino-acid chain; its full sequence is High mobility group protein B1 (215 aa).

Residue 1 to 10 coordinates heparin; sequence MGKGDPKKPR. Positions 1 to 97 are sufficient for interaction with HAVCR2; that stretch reads MGKGDPKKPR…KFKDPNAPKR (97 aa). 4 positions are modified to N6-acetyllysine: Lys-3, Lys-7, Lys-8, and Lys-12. Positions 3-15 are LPS binding (delipidated); the sequence is KGDPKKPRGKMSS. Positions 9–79 form a DNA-binding region, HMG box 1; that stretch reads PRGKMSSYAF…RYEREMKTYI (71 aa). Cys-23 bears the Cysteine sulfonic acid (-SO3H); alternate mark. A disulfide bridge links Cys-23 with Cys-45. An NLS 1 region spans residues 27-43; sequence HKKKHPDASVNFSEFSK. The Nuclear localization signal (NLS) 1 motif lies at 27 to 43; that stretch reads HKKKHPDASVNFSEFSK. N6-acetyllysine is present on residues Lys-28, Lys-29, and Lys-30. An Isoglutamyl lysine isopeptide (Lys-Gln) (interchain with Q-?) cross-link involves residue Lys-28. Ser-35 bears the Phosphoserine mark. Position 43 is an N6-acetyllysine (Lys-43). Isoglutamyl lysine isopeptide (Lys-Gln) (interchain with Q-?) cross-links involve residues Lys-43 and Lys-44. Cys-45 bears the Cysteine sulfonic acid (-SO3H); alternate mark. Residue Lys-68 forms an Isoglutamyl lysine isopeptide (Lys-Gln) (interchain with Q-?) linkage. Residues 76-95 form a disordered region; that stretch reads KTYIPPKGETKKKFKDPNAP. An LPS binding (Lipid A) region spans residues 80 to 96; the sequence is PPKGETKKKFKDPNAPK. Positions 83-94 are enriched in basic and acidic residues; sequence GETKKKFKDPNA. A cytokine-stimulating activity region spans residues 89 to 108; that stretch reads FKDPNAPKRPPSAFFLFCSE. Position 90 is an N6-acetyllysine (Lys-90). The segment at residues 95-163 is a DNA-binding region (HMG box 2); that stretch reads PKRPPSAFFL…KYEKDIAAYR (69 aa). Ser-100 bears the Phosphoserine mark. Cys-106 is modified (cysteine sulfonic acid (-SO3H)). Lys-127, Lys-128, Lys-141, Lys-172, Lys-173, Lys-177, and Lys-180 each carry N6-acetyllysine. The segment at 150-183 is binding to AGER/RAGE; that stretch reads KLKEKYEKDIAAYRAKGKPDAAKKGVVKAEKSKK. Residues 161 to 179 show a composition bias toward basic and acidic residues; sequence AYRAKGKPDAAKKGVVKAE. Residues 161-215 are disordered; sequence AYRAKGKPDAAKKGVVKAEKSKKKKEEEDDEEDEEDEEEEEEEEDEDEEEDDDDE. Residues 178-184 form an NLS 2 region; it reads AEKSKKK. Residues 178 to 184 carry the Nuclear localization signal (NLS) 2 motif; the sequence is AEKSKKK. An Isoglutamyl lysine isopeptide (Lys-Gln) (interchain with Q-?) cross-link involves residue Lys-180. Position 181 is an ADP-ribosylserine (Ser-181). Residues Lys-182, Lys-183, Lys-184, and Lys-185 each carry the N6-acetyllysine modification. Residues Lys-182, Lys-183, and Lys-184 each participate in an isoglutamyl lysine isopeptide (Lys-Gln) (interchain with Q-?) cross-link. Positions 187 to 215 are enriched in acidic residues; that stretch reads EEDDEEDEEDEEEEEEEEDEDEEEDDDDE.

The protein belongs to the HMGB family. As to quaternary structure, interacts (fully reduced HMGB1) with CXCL12; probably in a 1:2 ratio involving two molecules of CXCL12, each interacting with one HMG box of HMGB1; inhibited by glycyrrhizin. Associates with the TLR4:LY96 receptor complex. Component of the RAG complex composed of core components RAG1 and RAG2, and associated component HMGB1 or HMGB2. Interacts (in cytoplasm upon starvation) with BECN1; inhibits the interaction of BECN1 and BCL2 leading to promotion of autophagy. Interacts with KPNA1; involved in nuclear import. Interacts with SREBF1, TLR2, TLR4, TLR9, APEX1, FEN1, POLB, TERT. Interacts with AGER, PTPRZ1, IL1B, MSH2, XPA, XPC, HNF1A, TP53. Interacts with CD24; the probable CD24:SIGLEC10 complex is proposed to inhibit HGMB1-mediated tissue damage immune response. Interacts with THBD; prevents HGMB1 interaction with ACER/RAGE and inhibits HGMB1 pro-inflammatory activity. Interacts with HAVCR2; impairs HMGB1 binding to B-DNA and likely HMGB1-mediated innate immune response. Interacts with XPO1; mediating nuclear export. Interacts with receptor RAGE/AGER. In terms of processing, acetylated on multiple sites upon stimulation with LPS. Acetylation on lysine residues in the nuclear localization signals (NLS 1 and NLS 2) leads to cytoplasmic localization and subsequent secretion. Acetylation on Lys-3 results in preferential binding to DNA ends and impairs DNA bending activity. Post-translationally, phosphorylated at serine residues. Phosphorylation in both NLS regions is required for cytoplasmic translocation followed by secretion. Reduction/oxidation of cysteine residues Cys-23, Cys-45 and Cys-106 and a possible intramolecular disulfide bond involving Cys-23 and Cys-45 give rise to different redox forms with specific functional activities in various cellular compartments: 1- Fully reduced HGMB1 (HMGB1C23hC45hC106h), 2- Disulfide HMGB1 (HMGB1C23-C45C106h) and 3- Sulfonyl HMGB1 (HMGB1C23soC45soC106so). In terms of processing, poly-ADP-ribosylated by PARP1 when secreted following stimulation with LPS. Post-translationally, in vitro cleavage by CASP1 is liberating a HMG box 1-containing peptide which may mediate immunogenic activity; the peptide antagonizes apoptosis-induced immune tolerance. Can be proteolytically cleaved by a thrombin:thrombomodulin complex; reduces binding to heparin and pro-inflammatory activities. Forms covalent cross-links mediated by transglutaminase TGM2, between a glutamine and the epsilon-amino group of a lysine residue, forming homopolymers and heteropolymers. As to expression, serum levels are found elevated in mice with modeled systemic lupus erythematosus (SLE) and are correlated with SLE disease activity.

The protein localises to the nucleus. It is found in the cytoplasm. The protein resides in the chromosome. Its subcellular location is the cell membrane. It localises to the endosome. The protein localises to the endoplasmic reticulum-Golgi intermediate compartment. It is found in the secreted. Functionally, multifunctional redox sensitive protein with various roles in different cellular compartments. In the nucleus is one of the major chromatin-associated non-histone proteins and acts as a DNA chaperone involved in replication, transcription, chromatin remodeling, V(D)J recombination, DNA repair and genome stability. Proposed to be an universal biosensor for nucleic acids. Promotes host inflammatory response to sterile and infectious signals and is involved in the coordination and integration of innate and adaptive immune responses. In the cytoplasm functions as a sensor and/or chaperone for immunogenic nucleic acids implicating the activation of TLR9-mediated immune responses, and mediates autophagy. Acts as a danger associated molecular pattern (DAMP) molecule that amplifies immune responses during tissue injury. Released to the extracellular environment can bind DNA, nucleosomes, IL-1 beta, CXCL12, AGER isoform 2/sRAGE, lipopolysaccharide (LPS) and lipoteichoic acid (LTA), and activates cells through engagement of multiple surface receptors. In the extracellular compartment fully reduced HMGB1 (released by necrosis) acts as a chemokine, disulfide HMGB1 (actively secreted) as a cytokine, and sulfonyl HMGB1 (released from apoptotic cells) promotes immunological tolerance. Has proangiogenic activity. May be involved in platelet activation. Binds to phosphatidylserine and phosphatidylethanolamide. Bound to RAGE mediates signaling for neuronal outgrowth. May play a role in accumulation of expanded polyglutamine (polyQ) proteins. Its function is as follows. Nuclear functions are attributed to fully reduced HGMB1. Associates with chromatin and binds DNA with a preference to non-canonical DNA structures such as single-stranded DNA, DNA-containing cruciforms or bent structures, supercoiled DNA and ZDNA. Can bent DNA and enhance DNA flexibility by looping thus providing a mechanism to promote activities on various gene promoters by enhancing transcription factor binding and/or bringing distant regulatory sequences into close proximity. May be involved in nucleotide excision repair (NER), mismatch repair (MMR) and base excision repair (BER) pathways, and double strand break repair such as non-homologous end joining (NHEJ). Involved in V(D)J recombination by acting as a cofactor of the RAG complex: acts by stimulating cleavage and RAG protein binding at the 23 bp spacer of conserved recombination signal sequences (RSS). In vitro can displace histone H1 from highly bent DNA. Can restructure the canonical nucleosome leading to relaxation of structural constraints for transcription factor-binding. Enhances binding of sterol regulatory element-binding proteins (SREBPs) such as SREBF1 to their cognate DNA sequences and increases their transcriptional activities. Facilitates binding of TP53 to DNA. Proposed to be involved in mitochondrial quality control and autophagy in a transcription-dependent fashion implicating HSPB1; however, this function has been questioned. Can modulate the activity of the telomerase complex and may be involved in telomere maintenance. In terms of biological role, in the cytoplasm proposed to dissociate the BECN1:BCL2 complex via competitive interaction with BECN1 leading to autophagy activation. Can protect BECN1 and ATG5 from calpain-mediated cleavage and thus proposed to control their proautophagic and proapoptotic functions and to regulate the extent and severity of inflammation-associated cellular injury. In myeloid cells has a protective role against endotoxemia and bacterial infection by promoting autophagy. Involved in endosomal translocation and activation of TLR9 in response to CpG-DNA in macrophages. In the extracellular compartment (following either active secretion or passive release) involved in regulation of the inflammatory response. Fully reduced HGMB1 (which subsequently gets oxidized after release) in association with CXCL12 mediates the recruitment of inflammatory cells during the initial phase of tissue injury; the CXCL12:HMGB1 complex triggers CXCR4 homodimerization. Induces the migration of monocyte-derived immature dendritic cells and seems to regulate adhesive and migratory functions of neutrophils implicating AGER/RAGE and ITGAM. Can bind to various types of DNA and RNA including microbial unmethylated CpG-DNA to enhance the innate immune response to nucleic acids. Proposed to act in promiscuous DNA/RNA sensing which cooperates with subsequent discriminative sensing by specific pattern recognition receptors. Promotes extracellular DNA-induced AIM2 inflammasome activation implicating AGER/RAGE. Disulfide HMGB1 binds to transmembrane receptors, such as AGER/RAGE, TLR2, TLR4 and probably TREM1, thus activating their signal transduction pathways. Mediates the release of cytokines/chemokines such as TNF, IL-1, IL-6, IL-8, CCL2, CCL3, CCL4 and CXCL10. Promotes secretion of interferon-gamma by macrophage-stimulated natural killer (NK) cells in concert with other cytokines like IL-2 or IL-12. TLR4 is proposed to be the primary receptor promoting macrophage activation and signaling through TLR4 seems to implicate LY96/MD-2. In bacterial LPS- or LTA-mediated inflammatory responses binds to the endotoxins and transfers them to CD14 for signaling to the respective TLR4:LY96 and TLR2 complexes. Contributes to tumor proliferation by association with ACER/RAGE. Can bind to IL1-beta and signals through the IL1R1:IL1RAP receptor complex. Binding to class A CpG activates cytokine production in plasmacytoid dendritic cells implicating TLR9, MYD88 and AGER/RAGE and can activate autoreactive B cells. Via HMGB1-containing chromatin immune complexes may also promote B cell responses to endogenous TLR9 ligands through a B-cell receptor (BCR)-dependent and ACER/RAGE-independent mechanism. Inhibits phagocytosis of apoptotic cells by macrophages; the function is dependent on poly-ADP-ribosylation and involves binding to phosphatidylserine on the cell surface of apoptotic cells. In adaptive immunity may be involved in enhancing immunity through activation of effector T-cells and suppression of regulatory T (TReg) cells. In contrast, without implicating effector or regulatory T-cells, required for tumor infiltration and activation of T-cells expressing the lymphotoxin LTA:LTB heterotrimer thus promoting tumor malignant progression. Also reported to limit proliferation of T-cells. Released HMGB1:nucleosome complexes formed during apoptosis can signal through TLR2 to induce cytokine production. Involved in induction of immunological tolerance by apoptotic cells; its pro-inflammatory activities when released by apoptotic cells are neutralized by reactive oxygen species (ROS)-dependent oxidation specifically on Cys-106. During macrophage activation by activated lymphocyte-derived self apoptotic DNA (ALD-DNA) promotes recruitment of ALD-DNA to endosomes. This Mus musculus (Mouse) protein is High mobility group protein B1 (Hmgb1).